The following is a 400-amino-acid chain: WD repeat and FYVE domain-containing protein 2 (400 aa).

WD repeat units follow at residues 22–61 (GSQEVVNMAVIVPKEEGVISVSEDRTVRVWLKRDSGQYWP), 66–105 (AMPSPCSCMSFNPETRRLSIGLDNGTISEFILSEDYNKMT), 112–150 (AHQSRVTMILFVLELEWVLSTGQDKQFAWHCSESGQRLG), 153–192 (RTSAVASGLQFDVETRHVFIGDHSGQVTILKLEQENCTLV), 197–236 (GHTGGVTALCWDPVQRVLFSGSSDHSVIMWDIGGRKGTAI), and 240–279 (GHNDRVQALSYAQHTRQLISCGGDGGIVVWNMDVERQETP). The segment at 281-352 (WLDSDSCQKC…VCDSCHEAIT (72 aa)) adopts an FYVE-type zinc-finger fold. Cysteine 287, cysteine 290, cysteine 314, cysteine 317, cysteine 322, cysteine 325, cysteine 344, and cysteine 347 together coordinate Zn(2+). A WD 7 repeat occupies 364–399 (DSKHNIVHVHFDATRGWLLTSGTDKVIKLWDMTPVV).

In terms of assembly, homodimer. Interacts (via WD repeats 1-3) with AKT1, AKT2, PRKCZ and PRKCI. Interacts with VAMP2. Forms a complex with VAMP2 and PRKCZ. Interacts with FOXO1. Forms a complex with AKT1 and FOXO1.

It localises to the endosome. The protein localises to the early endosome. It is found in the cytoplasm. Its function is as follows. Acts in an adapter protein-like fashion to mediate the interaction between the kinase PRKCZ and its substrate VAMP2 and increases the PRKCZ-dependent phosphorylation of VAMP2. Positively regulates adipocyte differentiation, by facilitating the phosphorylation and thus inactivation of the anti-adipogenetic transcription factor FOXO1 by the kinase AKT1. Plays a role in endosomal control of AKT2 signaling; required for insulin-stimulated AKT2 phosphorylation and glucose uptake and insulin-stimulated phosphorylation of AKT2 substrates. Participates in transferrin receptor endocytosis. This Homo sapiens (Human) protein is WD repeat and FYVE domain-containing protein 2 (WDFY2).